Reading from the N-terminus, the 739-residue chain is Probable beta-glucosidase L (739 aa).

The first 17 residues, 1–17, serve as a signal peptide directing secretion; that stretch reads MQTLFLSLLAAAVTVHA. Asn-40 and Asn-224 each carry an N-linked (GlcNAc...) asparagine glycan. Asp-252 is a catalytic residue. N-linked (GlcNAc...) asparagine glycosylation occurs at Asn-398.

It belongs to the glycosyl hydrolase 3 family.

Its subcellular location is the secreted. The enzyme catalyses Hydrolysis of terminal, non-reducing beta-D-glucosyl residues with release of beta-D-glucose.. The protein operates within glycan metabolism; cellulose degradation. Functionally, beta-glucosidases are one of a number of cellulolytic enzymes involved in the degradation of cellulosic biomass. Catalyzes the last step releasing glucose from the inhibitory cellobiose. This is Probable beta-glucosidase L (bglL) from Aspergillus fumigatus (strain ATCC MYA-4609 / CBS 101355 / FGSC A1100 / Af293) (Neosartorya fumigata).